Consider the following 328-residue polypeptide: E3 ubiquitin-protein ligase RING1-like (328 aa).

Serine 2 carries the post-translational modification N-acetylserine. The RING-type; atypical zinc finger occupies 216-257 (CAVCMDEFEDGSDVKQMPCKHVFHQDCLLPWLELHNSCPVCR). Positions 264-328 (DPDYENRSQG…NLETRGEDLD (65 aa)) are disordered. Gly residues predominate over residues 306 to 319 (SGSGSGAPGTGGGN).

Auto-ubiquitinated as part of the enzymatic reaction. In terms of tissue distribution, expressed in leaves, roots, trichomes, stipules, and also in anthers and stigma of flowers.

The enzyme catalyses S-ubiquitinyl-[E2 ubiquitin-conjugating enzyme]-L-cysteine + [acceptor protein]-L-lysine = [E2 ubiquitin-conjugating enzyme]-L-cysteine + N(6)-ubiquitinyl-[acceptor protein]-L-lysine.. Its pathway is protein modification; protein ubiquitination. In terms of biological role, E3 ubiquitin-protein ligase which accepts ubiquitin from an E2 ubiquitin-conjugating enzyme in the form of a thioester and then directly transfers the ubiquitin to targeted substrates. Promotes polyubiquitination of target proteins. In Arabidopsis thaliana (Mouse-ear cress), this protein is E3 ubiquitin-protein ligase RING1-like.